The chain runs to 281 residues: Pantothenate synthetase (281 aa).

Position 29-36 (29-36 (MGYLHEGH)) interacts with ATP. His36 serves as the catalytic Proton donor. Gln60 contributes to the (R)-pantoate binding site. Gln60 is a beta-alanine binding site. 146–149 (GQKD) is an ATP binding site. Gln152 is a (R)-pantoate binding site. ATP contacts are provided by residues Val175 and 183–186 (MSSR).

The protein belongs to the pantothenate synthetase family. As to quaternary structure, homodimer.

Its subcellular location is the cytoplasm. It carries out the reaction (R)-pantoate + beta-alanine + ATP = (R)-pantothenate + AMP + diphosphate + H(+). It functions in the pathway cofactor biosynthesis; (R)-pantothenate biosynthesis; (R)-pantothenate from (R)-pantoate and beta-alanine: step 1/1. Functionally, catalyzes the condensation of pantoate with beta-alanine in an ATP-dependent reaction via a pantoyl-adenylate intermediate. The protein is Pantothenate synthetase of Pseudothermotoga lettingae (strain ATCC BAA-301 / DSM 14385 / NBRC 107922 / TMO) (Thermotoga lettingae).